The primary structure comprises 156 residues: CD-NTase/cGAS isopeptidase (156 aa).

The MPN domain maps to Ile9 to Ile147. Glu38 acts as the Proton donor/acceptor in catalysis. His100, His102, and Asp113 together coordinate Zn(2+). A JAMM motif motif is present at residues His100–Asp113.

It belongs to the peptidase M67B family. Cap3 isopeptidase subfamily.

Its function is as follows. Metalloprotease priming reversal component of a CBASS antivirus system. CBASS (cyclic oligonucleotide-based antiphage signaling system) provides immunity against bacteriophages. The CD-NTase protein (DncV) synthesizes cyclic nucleotides in response to infection; these serve as specific second messenger signals. The signals activate a diverse range of effectors, leading to bacterial cell death and thus abortive phage infection. A type II-A(GA) CBASS system. In terms of biological role, reverses the primed state of DncV, the CD-NTase, cleaving it from cellular proteins. Cleaves a Sumo-DncV-DncV fusion protein precisely between the 2 DncV moieties. Protects E.coli against phage infection. When capV and dncV are introduced in E.coli MG1655 there is 1000-fold protection against phage P1; protection against other phage (T4, T5 and T6) requires the 2 subsequent genes. In another paper the capV-dncV-cap2-cap3 operon gives 10(4)-10(5)-fold protection against phages lambda, T2, T4 and T6, about 1000-fold protection against P1 and 10-fold protection against T5. This chain is CD-NTase/cGAS isopeptidase, found in Escherichia coli (strain TW11681).